The chain runs to 600 residues: Adenine deaminase (600 aa).

Belongs to the metallo-dependent hydrolases superfamily. Adenine deaminase family. It depends on Mn(2+) as a cofactor.

The catalysed reaction is adenine + H2O + H(+) = hypoxanthine + NH4(+). This is Adenine deaminase from Bradyrhizobium sp. (strain BTAi1 / ATCC BAA-1182).